The chain runs to 371 residues: MSTNNSDIRVVVGMSGGVDSSVTAHILKEQGYDVIGIFMKNWDDTDEFGVCTATEDYDDVIRVANQIGIPYYAVNFEKEYWDKVFTYFLEEYKLGRTPNPDVMCNKEIKFKAFLEHAESLGADYVATGHYAQVKKIGDEIELLRGVDNNKDQTYFLNQLSQDQLKKVMFPLGGMEKTEVREIATKAGLATANKKDSTGICFIGERNFKQFLSEYLPAQPGEMRTLDGEVLGKHDGLMYYTIGQRHGLGIGGDGEPWFVVGKDLKANVLFVEQGFHHESLYSDSLIATDISFTTNAEKPKTFECTAKFRYRQTDTKVTVHLRSDGTAEVVFADPVRAITPGQAVVFYDGDICLGGGTIDTVWKNEAKLDYVG.

ATP contacts are provided by residues Gly13–Ser20 and Met39. Residues Asn99–Asp101 form an interaction with target base in tRNA region. Residue Cys104 is the Nucleophile of the active site. Residues Cys104 and Cys200 are joined by a disulfide bond. Residue Gly128 coordinates ATP. Residues Lys150–Gln152 form an interaction with tRNA region. Cys200 acts as the Cysteine persulfide intermediate in catalysis. The interval Arg308 to Tyr309 is interaction with tRNA.

It belongs to the MnmA/TRMU family.

It is found in the cytoplasm. It carries out the reaction S-sulfanyl-L-cysteinyl-[protein] + uridine(34) in tRNA + AH2 + ATP = 2-thiouridine(34) in tRNA + L-cysteinyl-[protein] + A + AMP + diphosphate + H(+). In terms of biological role, catalyzes the 2-thiolation of uridine at the wobble position (U34) of tRNA, leading to the formation of s(2)U34. In Listeria welshimeri serovar 6b (strain ATCC 35897 / DSM 20650 / CCUG 15529 / CIP 8149 / NCTC 11857 / SLCC 5334 / V8), this protein is tRNA-specific 2-thiouridylase MnmA.